A 275-amino-acid polypeptide reads, in one-letter code: ATP synthase subunit delta (275 aa).

The protein belongs to the ATPase delta chain family. In terms of assembly, F-type ATPases have 2 components, F(1) - the catalytic core - and F(0) - the membrane proton channel. F(1) has five subunits: alpha(3), beta(3), gamma(1), delta(1), epsilon(1). F(0) has three main subunits: a(1), b(2) and c(10-14). The alpha and beta chains form an alternating ring which encloses part of the gamma chain. F(1) is attached to F(0) by a central stalk formed by the gamma and epsilon chains, while a peripheral stalk is formed by the delta and b chains.

It is found in the cell membrane. Functionally, f(1)F(0) ATP synthase produces ATP from ADP in the presence of a proton or sodium gradient. F-type ATPases consist of two structural domains, F(1) containing the extramembraneous catalytic core and F(0) containing the membrane proton channel, linked together by a central stalk and a peripheral stalk. During catalysis, ATP synthesis in the catalytic domain of F(1) is coupled via a rotary mechanism of the central stalk subunits to proton translocation. This protein is part of the stalk that links CF(0) to CF(1). It either transmits conformational changes from CF(0) to CF(1) or is implicated in proton conduction. This is ATP synthase subunit delta from Pseudarthrobacter chlorophenolicus (strain ATCC 700700 / DSM 12829 / CIP 107037 / JCM 12360 / KCTC 9906 / NCIMB 13794 / A6) (Arthrobacter chlorophenolicus).